Here is a 652-residue protein sequence, read N- to C-terminus: Regulator of DNA class I crossover intermediates 1 (652 aa).

The segment at residues 1-228 (MNWVGGSRSR…APYKRTNSSE (228 aa)) is a DNA-binding region (binds DNA containing a D-loop). Disordered stretches follow at residues 464 to 512 (YLES…KATE) and 621 to 652 (EKES…SNSL). A compositionally biased stretch (low complexity) spans 467-477 (SSQSSQSASYS). Composition is skewed to polar residues over residues 478–491 (PRPT…STDL) and 639–652 (DTTG…SNSL).

In terms of assembly, interacts with MSH5. Interacts with TEX11. In terms of tissue distribution, expressed mainly in testis (at protein level). Expressed in spermatogonia and enriched in spermatocytes; absent in testicular somatic cells (at protein level). No expression or low levels in other tissues.

Its subcellular location is the chromosome. In terms of biological role, involved in recombination, probably acting by stabilizing recombination intermediates during meiotic crossover formation. Required for normal germline development and fertility. Required for meiotic progression, complete chromosomal synapsis and crossover formation. Binds double-stranded DNA. However, also binds branched DNA molecules, such as those containing a D-loop or Holliday junction structure. Probably not required for formation of DNA double-strand breaks (DSBs). Also binds RNA in an RNA structure-independent manner, with a preference for binding 3'-UTR regions of mRNAs; may stabilize bound RNAs. This Mus musculus (Mouse) protein is Regulator of DNA class I crossover intermediates 1.